The primary structure comprises 195 residues: ATP-dependent Clp protease proteolytic subunit (195 aa).

S96 (nucleophile) is an active-site residue. H121 is an active-site residue.

The protein belongs to the peptidase S14 family. Fourteen ClpP subunits assemble into 2 heptameric rings which stack back to back to give a disk-like structure with a central cavity, resembling the structure of eukaryotic proteasomes.

The protein localises to the cytoplasm. It catalyses the reaction Hydrolysis of proteins to small peptides in the presence of ATP and magnesium. alpha-casein is the usual test substrate. In the absence of ATP, only oligopeptides shorter than five residues are hydrolyzed (such as succinyl-Leu-Tyr-|-NHMec, and Leu-Tyr-Leu-|-Tyr-Trp, in which cleavage of the -Tyr-|-Leu- and -Tyr-|-Trp bonds also occurs).. In terms of biological role, cleaves peptides in various proteins in a process that requires ATP hydrolysis. Has a chymotrypsin-like activity. Plays a major role in the degradation of misfolded proteins. The polypeptide is ATP-dependent Clp protease proteolytic subunit (Elusimicrobium minutum (strain Pei191)).